Reading from the N-terminus, the 476-residue chain is Doublesex and mab-3 related transcription factor 3 (476 aa).

The segment at residues C29–R76 is a DNA-binding region (DM). 2 disordered regions span residues D89 to T130 and G147 to C195. The segment covering D102–Q121 has biased composition (low complexity). The span at F176–S185 shows a compositional bias: basic and acidic residues. Residues R255–V290 enclose the DMA domain. Residues N418–R432 show a composition bias toward polar residues. The segment at N418–S476 is disordered.

This sequence belongs to the DMRT family.

The protein localises to the nucleus. Probable transcription factor that plays a role in configuring the spinal circuits controlling stride in vertebrates. Involved in neuronal specification within a specific subdivision of spinal cord neurons and in the development of a coordinated locomotor network controlling limb movements. May regulate transcription during sexual development. The polypeptide is Doublesex and mab-3 related transcription factor 3 (Dmrt3) (Rattus norvegicus (Rat)).